The sequence spans 573 residues: Excitatory amino acid transporter 2 (573 aa).

Residues 1 to 11 (MASTEGANNMP) show a composition bias toward polar residues. A disordered region spans residues 1 to 29 (MASTEGANNMPKQVEVRMHDSHLSSEEPK). Over 1 to 44 (MASTEGANNMPKQVEVRMHDSHLSSEEPKHRNLGMRMCDKLGKN) the chain is Cytoplasmic. Phosphoserine is present on residues serine 3, serine 21, serine 24, and serine 25. Basic and acidic residues predominate over residues 14–29 (VEVRMHDSHLSSEEPK). Cysteine 38 carries S-palmitoyl cysteine lipidation. The next 3 membrane-spanning stretches (helical) occupy residues 45 to 64 (LLLS…GGLL), 88 to 108 (MLKM…LSGL), and 121 to 142 (MVYY…VLAI). N-linked (GlcNAc...) asparagine glycans are attached at residues asparagine 205 and asparagine 215. A run of 3 helical transmembrane segments spans residues 235–258 (FKDG…MGKM), 268–295 (FFNI…ACLI), and 317–338 (ITVI…YFVV). Residues 344–374 (FSFFAGIFQAWITALGTASSAGTLPVTFRCL) constitute an intramembrane region (discontinuously helical). Position 361-363 (361-363 (ASS)) interacts with L-aspartate. The helical transmembrane segment at 384–410 (VTRFVLPVGATINMDGTALYEAVAAIF) threads the bilayer. Residues glycine 392, threonine 394, and asparagine 396 each coordinate Na(+). L-aspartate is bound by residues threonine 400, 441 to 445 (IPSAG), aspartate 474, and asparagine 481. The discontinuously helical intramembrane region spans 424 to 457 (IVTVSLTATLASIGAASIPSAGLVTMLLILTAVG). A helical transmembrane segment spans residues 471–492 (WLLDRMRTSVNVVGDSFGAGIV). Na(+)-binding residues include asparagine 481 and aspartate 485. A phosphoserine mark is found at serine 505, serine 520, serine 531, and serine 533. Position 538 is a phosphotyrosine (tyrosine 538). 3 positions are modified to phosphoserine: serine 543, serine 559, and serine 563.

The protein belongs to the dicarboxylate/amino acid:cation symporter (DAACS) (TC 2.A.23) family. SLC1A2 subfamily. As to quaternary structure, homotrimer. Interacts with AJUBA. Post-translationally, glycosylated. In terms of processing, palmitoylation at Cys-38 is not required for correct subcellular localization, but is important for glutamate uptake activity. As to expression, localized in brain and is highly enriched in the Purkinje cell layer in cerebellum.

The protein localises to the cell membrane. The enzyme catalyses K(+)(in) + L-glutamate(out) + 3 Na(+)(out) + H(+)(out) = K(+)(out) + L-glutamate(in) + 3 Na(+)(in) + H(+)(in). It carries out the reaction D-aspartate(out) + K(+)(in) + 3 Na(+)(out) + H(+)(out) = D-aspartate(in) + K(+)(out) + 3 Na(+)(in) + H(+)(in). The catalysed reaction is K(+)(in) + L-aspartate(out) + 3 Na(+)(out) + H(+)(out) = K(+)(out) + L-aspartate(in) + 3 Na(+)(in) + H(+)(in). In terms of biological role, sodium-dependent, high-affinity amino acid transporter that mediates the uptake of L-glutamate and also L-aspartate and D-aspartate. Functions as a symporter that transports one amino acid molecule together with two or three Na(+) ions and one proton, in parallel with the counter-transport of one K(+) ion. Mediates Cl(-) flux that is not coupled to amino acid transport; this avoids the accumulation of negative charges due to aspartate and Na(+) symport. Essential for the rapid removal of released glutamate from the synaptic cleft, and for terminating the postsynaptic action of glutamate. This is Excitatory amino acid transporter 2 (Slc1a2) from Rattus norvegicus (Rat).